Reading from the N-terminus, the 30-residue chain is Snaclec coagulation factor IX/factor X-binding protein subunit B (30 aa).

C2 and C13 form a disulfide bridge. In terms of domain architecture, C-type lectin spans Y9–C30.

It belongs to the snaclec family. As to quaternary structure, heterodimer of subunits A and B; disulfide-linked. Glycosylated. As to expression, expressed by the venom gland.

Its subcellular location is the secreted. Functionally, anticoagulant protein which binds to the gamma-carboxyglutamic acid-domain regions of factors IX (F9) and factor X (F10) in the presence of calcium with a 1 to 1 stoichiometry. The sequence is that of Snaclec coagulation factor IX/factor X-binding protein subunit B from Bothrops jararaca (Jararaca).